The following is a 169-amino-acid chain: Myosin regulatory light chain 2, skeletal muscle isoform A (169 aa).

Position 21 is a phosphoserine (serine 21). EF-hand domains are found at residues 26–61 (SQIQ…MGQL), 96–131 (DPED…QCDR), and 132–167 (FTAE…GEEK). Ca(2+) is bound by residues aspartate 39, asparagine 41, aspartate 43, and aspartate 50.

As to quaternary structure, myosin is a hexamer of 2 heavy chains and 4 light chains. Interacts with nanos3; the interaction negatively regulates mylpfa phosphorylation.

Functionally, myosin regulatory subunit that plays a role to maintain muscle integrity during early development. Plays a role in muscle contraction. The sequence is that of Myosin regulatory light chain 2, skeletal muscle isoform A (mylpfa) from Danio rerio (Zebrafish).